Here is a 119-residue protein sequence, read N- to C-terminus: Small ribosomal subunit protein uS13 (119 aa).

The disordered stretch occupies residues 92 to 119; it reads RRGLPVRGQRTKTNARTRKGPRKAIRAR.

The protein belongs to the universal ribosomal protein uS13 family. Part of the 30S ribosomal subunit. Forms a loose heterodimer with protein S19. Forms two bridges to the 50S subunit in the 70S ribosome.

Located at the top of the head of the 30S subunit, it contacts several helices of the 16S rRNA. In the 70S ribosome it contacts the 23S rRNA (bridge B1a) and protein L5 of the 50S subunit (bridge B1b), connecting the 2 subunits; these bridges are implicated in subunit movement. Contacts the tRNAs in the A and P-sites. In Nitrosomonas eutropha (strain DSM 101675 / C91 / Nm57), this protein is Small ribosomal subunit protein uS13.